Reading from the N-terminus, the 217-residue chain is 3-isopropylmalate dehydratase small subunit (217 aa).

It belongs to the LeuD family. LeuD type 1 subfamily. As to quaternary structure, heterodimer of LeuC and LeuD.

The enzyme catalyses (2R,3S)-3-isopropylmalate = (2S)-2-isopropylmalate. It functions in the pathway amino-acid biosynthesis; L-leucine biosynthesis; L-leucine from 3-methyl-2-oxobutanoate: step 2/4. Catalyzes the isomerization between 2-isopropylmalate and 3-isopropylmalate, via the formation of 2-isopropylmaleate. In Delftia acidovorans (strain DSM 14801 / SPH-1), this protein is 3-isopropylmalate dehydratase small subunit.